The sequence spans 427 residues: Phosphoribosylamine--glycine ligase (427 aa).

The 205-residue stretch at 109-313 (RNLMAEYKIE…LAEVVTGITE (205 aa)) folds into the ATP-grasp domain. 136–191 (VRDHDGDLAVKPIGLTGGKGVRIMGEQVDRAGAIEYIREINGGVVLEERLTGEEFT) provides a ligand contact to ATP. Mg(2+) contacts are provided by glutamine 271, glutamate 283, and asparagine 285. Residues glutamine 271, glutamate 283, and asparagine 285 each contribute to the Mn(2+) site.

This sequence belongs to the GARS family. Mg(2+) serves as cofactor. The cofactor is Mn(2+).

The catalysed reaction is 5-phospho-beta-D-ribosylamine + glycine + ATP = N(1)-(5-phospho-beta-D-ribosyl)glycinamide + ADP + phosphate + H(+). It functions in the pathway purine metabolism; IMP biosynthesis via de novo pathway; N(1)-(5-phospho-D-ribosyl)glycinamide from 5-phospho-alpha-D-ribose 1-diphosphate: step 2/2. In Methanoregula boonei (strain DSM 21154 / JCM 14090 / 6A8), this protein is Phosphoribosylamine--glycine ligase.